A 93-amino-acid chain; its full sequence is HssA/B-like protein 23 (93 aa).

Belongs to the hssA/B family.

This is HssA/B-like protein 23 (hssl23) from Dictyostelium discoideum (Social amoeba).